The following is a 362-amino-acid chain: Atypical chemokine receptor 3 (362 aa).

At 1–47 (MDVHLFDYAEPGNYSDINWPCNSSDCIVVDTVQCPTMPNKNVLLYTL) the chain is on the extracellular side. Residues Asn-13 and Asn-22 are each glycosylated (N-linked (GlcNAc...) asparagine). The helical transmembrane segment at 48–68 (SFIYIFIFVIGMIANSVVVWV) threads the bilayer. Residues 69–81 (NIQAKTTGYDTHC) lie on the Cytoplasmic side of the membrane. A helical transmembrane segment spans residues 82–102 (YILNLAIADLWVVITIPVWVV). At 103–118 (SLVQHNQWPMGELTCK) the chain is on the extracellular side. The cysteines at positions 117 and 196 are disulfide-linked. Residues 119–139 (ITHLIFSINLFGSIFFLACMS) traverse the membrane as a helical segment. Topologically, residues 140-162 (VDRYLSITYFTGTSSYKKKMVRR) are cytoplasmic. The chain crosses the membrane as a helical span at residues 163-183 (VVCILVWLLAFFVSLPDTYYL). Over 184 to 213 (KTVTSASNNETYCRSFYPEHSIKEWLIGME) the chain is Extracellular. Residues 214-234 (LVSVILGFAVPFTIIAIFYFL) traverse the membrane as a helical segment. Residues 235-252 (LARAMSASGDQEKHSSRK) lie on the Cytoplasmic side of the membrane. A helical membrane pass occupies residues 253–273 (IIFSYVVVFLVCWLPYHFVVL). Topologically, residues 274-296 (LDIFSILHYIPFTCQLENVLFTA) are extracellular. The helical transmembrane segment at 297–319 (LHVTQCLSLVHCCVNPVLYSFIN) threads the bilayer. Topologically, residues 320 to 362 (RNYRYELMKAFIFKYSAKTGLTKLIDASRVSETEYSALEQNTK) are cytoplasmic. The interval 324–362 (YELMKAFIFKYSAKTGLTKLIDASRVSETEYSALEQNTK) is C-terminal cytoplasmic tail. Phosphoserine is present on residues Ser-347, Ser-350, and Ser-355.

The protein belongs to the G-protein coupled receptor 1 family. Atypical chemokine receptor subfamily. Homodimer. Can form heterodimers with CXCR4; heterodimerization may regulate CXCR4 signaling activity. Interacts with ARRB1 and ARRB2. In terms of processing, the Ser/Thr residues in the C-terminal cytoplasmic tail may be phosphorylated. Ubiquitinated at the Lys residues in its C-terminal cytoplasmic tail and is essential for correct trafficking from and to the cell membrane. Deubiquitinated by CXCL12-stimulation in a reversible manner. Not detected in blood, liver, lung and heart, but high expression detected in several tumor cell lines (at protein level). Expressed in heart, spleen, kidney, lung, ovary, brain, testis, astrocytes, neutrophils and B-lymphocytes.

Its subcellular location is the cell membrane. It localises to the early endosome. It is found in the recycling endosome. In terms of biological role, atypical chemokine receptor that controls chemokine levels and localization via high-affinity chemokine binding that is uncoupled from classic ligand-driven signal transduction cascades, resulting instead in chemokine sequestration, degradation, or transcytosis. Also known as interceptor (internalizing receptor) or chemokine-scavenging receptor or chemokine decoy receptor. Acts as a receptor for chemokines CXCL11 and CXCL12/SDF1. Chemokine binding does not activate G-protein-mediated signal transduction but instead induces beta-arrestin recruitment, leading to ligand internalization and activation of MAPK signaling pathway. Required for regulation of CXCR4 protein levels in migrating interneurons, thereby adapting their chemokine responsiveness. In glioma cells, transduces signals via MEK/ERK pathway, mediating resistance to apoptosis. Promotes cell growth and survival. Not involved in cell migration, adhesion or proliferation of normal hematopoietic progenitors but activated by CXCL11 in malignant hemapoietic cells, leading to phosphorylation of ERK1/2 (MAPK3/MAPK1) and enhanced cell adhesion and migration. Plays a regulatory role in CXCR4-mediated activation of cell surface integrins by CXCL12. Required for heart valve development. Regulates axon guidance in the oculomotor system through the regulation of CXCL12 levels. The chain is Atypical chemokine receptor 3 from Mus musculus (Mouse).